The sequence spans 398 residues: tRNA(Ile)-lysidine synthase (398 aa).

25 to 30 (SGGVDS) provides a ligand contact to ATP.

The protein belongs to the tRNA(Ile)-lysidine synthase family.

The protein resides in the cytoplasm. The catalysed reaction is cytidine(34) in tRNA(Ile2) + L-lysine + ATP = lysidine(34) in tRNA(Ile2) + AMP + diphosphate + H(+). Its function is as follows. Ligates lysine onto the cytidine present at position 34 of the AUA codon-specific tRNA(Ile) that contains the anticodon CAU, in an ATP-dependent manner. Cytidine is converted to lysidine, thus changing the amino acid specificity of the tRNA from methionine to isoleucine. This Francisella tularensis subsp. holarctica (strain OSU18) protein is tRNA(Ile)-lysidine synthase.